Consider the following 100-residue polypeptide: Small ribosomal subunit protein uS17 (100 aa).

It belongs to the universal ribosomal protein uS17 family. In terms of assembly, part of the 30S ribosomal subunit.

One of the primary rRNA binding proteins, it binds specifically to the 5'-end of 16S ribosomal RNA. This chain is Small ribosomal subunit protein uS17, found in Erythrobacter litoralis (strain HTCC2594).